Consider the following 409-residue polypeptide: Dipeptidase 1 (409 aa).

Positions 1-16 (MWTSWWLWPLVAVCAA) are cleaved as a signal peptide. Positions 36 and 38 each coordinate Zn(2+). N57 carries N-linked (GlcNAc...) asparagine glycosylation. A disulfide bridge connects residues C87 and C170. E141 lines the Zn(2+) pocket. H168 contacts substrate. H214 and H235 together coordinate Zn(2+). Cysteines 242 and 274 form a disulfide. R246 serves as a coordination point for substrate. N279 carries an N-linked (GlcNAc...) asparagine glycan. A substrate-binding site is contributed by D304. Residue S384 is the site of GPI-anchor amidated serine attachment. A propeptide spans 385 to 409 (AAPSLHLPPGSLLASLVPLLLLSLP) (removed in mature form).

It belongs to the metallo-dependent hydrolases superfamily. Peptidase M19 family. In terms of assembly, homodimer; disulfide-linked. Zn(2+) is required as a cofactor.

Its subcellular location is the apical cell membrane. The protein localises to the cell projection. It localises to the microvillus membrane. The protein resides in the cell membrane. The catalysed reaction is an L-aminoacyl-L-amino acid + H2O = 2 an L-alpha-amino acid. It carries out the reaction leukotriene D4 + H2O = leukotriene E4 + glycine. It catalyses the reaction L-cystine-bis-glycine + 2 H2O = L-cystine + 2 glycine. The enzyme catalyses a beta-lactam + H2O = a substituted beta-amino acid. The catalysed reaction is glycyldehydrophenylalanine + H2O = 2,3-didehydrophenylalanine + glycine. Inhibited by L-penicillamine. Inhibited by cilastatin. Its function is as follows. Hydrolyzes a wide range of dipeptides. Hydrolyzes the conversion of leukotriene D4 to leukotriene E4. Hydrolyzes cystinyl-bis-glycine (cys-bis-gly) formed during glutathione degradation. Also possesses beta lactamase activity and hydrolytically inactivates beta-lactam antibiotics. Independently of its dipeptidase activity, acts as an adhesion receptor for neutrophil recruitment from bloodstream into inflamed lungs and liver. The polypeptide is Dipeptidase 1 (DPEP1) (Sus scrofa (Pig)).